A 538-amino-acid chain; its full sequence is Syncytin-2 (538 aa).

Positions 1–15 (MGLLLLVLILTPSLA) are cleaved as a signal peptide. At 16–478 (AYRHPDFPLL…GWLNWEGTWK (463 aa)) the chain is on the extracellular side. The CXXC motif lies at 43-46 (CWLC). 3 disulfide bridges follow: Cys43-Cys46, Cys43-Cys439, and Cys431-Cys438. N-linked (GlcNAc...) asparagine glycosylation is found at Asn133, Asn146, Asn177, Asn220, Asn241, Asn247, Asn312, and Asn332. Residues 354–374 (FIPLLAGLGILAGTGTGIAGI) are fusion peptide. A CKS-17 motif is present at residues 414-430 (LQNRRGLDMLTAAQGGI). Positions 431–439 (CLALDEKCC) match the CX6CC motif. Asn443 carries N-linked (GlcNAc...) asparagine glycosylation. A helical transmembrane segment spans residues 479–499 (WFSWVLPLTGPLVSLLLLLLF). The Cytoplasmic segment spans residues 500–538 (GPCLLNLITQFVSSRLQAIKLQTNLSAGRHPRNIQESPF).

This sequence belongs to the gamma type-C retroviral envelope protein family. HERV class-I FRD env subfamily. As to quaternary structure, the surface and transmembrane proteins form a heterodimer. They are attached by non-covalent interactions or by a labile interchain disulfide bond. Interacts with MFSD2A. Specific enzymatic cleavages in vivo yield the mature SU and TM proteins. Post-translationally, the CXXC motif is highly conserved across a broad range of retroviral envelope proteins. It is thought to participate in the formation of a labile disulfide bond possibly with the CX6CC motif present in the transmembrane protein. Isomerization of the intersubunit disulfide bond to an SU intrachain disulfide bond is thought to occur upon receptor recognition in order to allow membrane fusion. Expressed at higher level in placenta. Expressed at lower level in adrenal, bone marrow, brain, breast, colon, kidney, lung, ovary, peripheral blood lymphocytes, prostate, skin, spleen, testis, thymus, thyroid, trachea.

The protein localises to the virion. It localises to the cell membrane. In terms of biological role, this endogenous retroviral envelope protein has retained its original fusogenic properties and participates in trophoblast fusion and the formation of a syncytium during placenta morphogenesis. The interaction with MFSD2A is apparently important for this process. Functionally, endogenous envelope proteins may have kept, lost or modified their original function during evolution but this one can still make pseudotypes with MLV, HIV-1 or SIV-1 virions and confer infectivity. Retroviral envelope proteins mediate receptor recognition and membrane fusion during early infection. The surface protein mediates receptor recognition, while the transmembrane protein anchors the envelope heterodimer to the viral membrane through one transmembrane domain. The other hydrophobic domain, called fusion peptide, mediates fusion of the viral membrane with the target cell membrane. The chain is Syncytin-2 (ERVFRD-1) from Homo sapiens (Human).